A 158-amino-acid chain; its full sequence is MPELTHFDAAGQAHMVDVGGKQETKRIAVARGSIRMLPETFALIRDGNAKKGDVIGIARIAAIQGSKRTADLIPLCHPLALTRVKVDFELDETLPGVHCTVQVETLGRTGVEMEALTAVQVGLLTVYDMCKAVDRGMTITDVKVLEKHGGKSGDWVAG.

Substrate contacts are provided by residues L75–H77 and M113–E114. Residue D128 is part of the active site.

It belongs to the MoaC family. Homohexamer; trimer of dimers.

The enzyme catalyses (8S)-3',8-cyclo-7,8-dihydroguanosine 5'-triphosphate = cyclic pyranopterin phosphate + diphosphate. It participates in cofactor biosynthesis; molybdopterin biosynthesis. In terms of biological role, catalyzes the conversion of (8S)-3',8-cyclo-7,8-dihydroguanosine 5'-triphosphate to cyclic pyranopterin monophosphate (cPMP). In Paraburkholderia xenovorans (strain LB400), this protein is Cyclic pyranopterin monophosphate synthase.